The chain runs to 230 residues: U2 small nuclear ribonucleoprotein A' (230 aa).

LRR repeat units lie at residues 15 to 36, 48 to 69, 71 to 92, 93 to 114, and 115 to 136; these read SLRN…NADT, GDRE…GVTE, HYTS…PRLE, TLRT…KNIA, and KLET…ESLK. The LRRCT domain occupies 149 to 187; that stretch reads NPVQHVPRYRSYMISILPSLRMLDFQRVTQKERDEAEAM.

This sequence belongs to the U2 small nuclear ribonucleoprotein A family. In terms of assembly, associated with the spliceosome.

The protein resides in the nucleus. In terms of biological role, involved in pre-mRNA splicing. This Yarrowia lipolytica (strain CLIB 122 / E 150) (Yeast) protein is U2 small nuclear ribonucleoprotein A' (LEA1).